A 755-amino-acid chain; its full sequence is Metabotropic glutamate receptor-like protein B (755 aa).

The N-terminal stretch at 1–23 is a signal peptide; it reads MKNLISIILLILIFFNYSKFVKS. N-linked (GlcNAc...) asparagine glycans are attached at residues Asn16, Asn183, and Asn273. The Extracellular portion of the chain corresponds to 24–385; it reads KNCKIAVLLS…VDYSSSMKLG (362 aa). Residues 386 to 406 traverse the membrane as a helical segment; it reads ITITSSICIFLCIISIIIVLV. Residues 407 to 417 are Cytoplasmic-facing; the sequence is FRTARIIKSAS. The helical transmembrane segment at 418-438 threads the bilayer; sequence PAFLFLILMGCILIFIGCIIF. Over 439-455 the chain is Extracellular; the sequence is SQSPNEGTCRARVWLLS. The helical transmembrane segment at 456-476 threads the bilayer; it reads IGYTIFLGSLLVKNWRIWLLF. The Cytoplasmic segment spans residues 477 to 492; it reads DNPKLKKRSITNWKLY. Residues 493-513 traverse the membrane as a helical segment; sequence PWVAGILAADVLILAFWQGLG. The Extracellular portion of the chain corresponds to 514-541; that stretch reads NIRSESRIGIDSLTKYQYTNVCSSNDQG. The chain crosses the membrane as a helical span at residues 542–562; sequence SIALYILLVFHGIKLLVACFI. The Cytoplasmic portion of the chain corresponds to 563 to 578; sequence SFKIKVVDIDEFNESK. A helical transmembrane segment spans residues 579–599; the sequence is PIASSVYIITFCLFIVIPLMV. Topologically, residues 600 to 607 are extracellular; it reads SPQSVTSQ. The helical transmembrane segment at 608 to 628 threads the bilayer; it reads VTTICVCAIVTTLISIILLFG. Over 629-755 the chain is Cytoplasmic; it reads SKFYKMITQG…GEVEIDSNNL (127 aa). Disordered regions lie at residues 656–676 and 691–729; these read QSLEKKKTGEEDDSESSEENG and FSSDTEDDENETQQIDEEKDEQIAGSNEDIIQPEENIEE. Positions 694-710 are enriched in acidic residues; it reads DTEDDENETQQIDEEKD.

It in the N-terminal section; belongs to the BMP lipoprotein family. The protein in the C-terminal section; belongs to the G-protein coupled receptor 3 family. GABA-B receptor subfamily.

The protein localises to the membrane. This is Metabotropic glutamate receptor-like protein B (grlB) from Dictyostelium discoideum (Social amoeba).